Consider the following 623-residue polypeptide: (-)-limonene synthase TPS1, chloroplastic (623 aa).

Residues 1–60 (MQCIAFHQFASSSSLPIWSSIDNRFTPKTSITSISKPKPKLKSKSNLKSRSRSSTCYPIQ) constitute a chloroplast transit peptide. The tract at residues 29-52 (TSITSISKPKPKLKSKSNLKSRSR) is disordered. Residues 37-51 (PKPKLKSKSNLKSRS) are compositionally biased toward basic residues. Residues arginine 337, aspartate 374, aspartate 378, arginine 516, and aspartate 519 each contribute to the (2E)-geranyl diphosphate site. 2 residues coordinate Mg(2+): aspartate 374 and aspartate 378. The DDXXD motif motif lies at 374 to 378 (DDMHD). Residues aspartate 519, threonine 523, and glutamate 527 each contribute to the Mg(2+) site.

This sequence belongs to the terpene synthase family. Tpsb subfamily. Requires Mg(2+) as cofactor. The cofactor is Mn(2+). K(+) serves as cofactor. Trichome.

The protein resides in the plastid. It is found in the chloroplast. The enzyme catalyses (2E)-geranyl diphosphate = (4S)-limonene + diphosphate. It carries out the reaction (2E)-geranyl diphosphate = terpinolene + diphosphate. The catalysed reaction is (2E)-geranyl diphosphate = (1R,5R)-alpha-pinene + diphosphate. It catalyses the reaction (2E)-geranyl diphosphate = (1R,5R)-beta-pinene + diphosphate. The enzyme catalyses (2E)-geranyl diphosphate = beta-myrcene + diphosphate. It carries out the reaction (2E)-geranyl diphosphate = (4R)-limonene + diphosphate. It functions in the pathway secondary metabolite biosynthesis; terpenoid biosynthesis. It participates in terpene metabolism; (4S)-limonene biosynthesis; (4S)-limonene from geranyl diphosphate: step 1/1. Involved in monoterpene (C10) olefins biosynthesis, constituants of cannabinoids and terpenoids-rich resins. Catalyzes mainly the conversion of (2E)-geranyl diphosphate to (-)-limonene, and also produces minor products such as (+)-limonene, (+)-alpha-pinene, terpinolene, (+)-beta-pinene and beta-myrcene. The sequence is that of (-)-limonene synthase TPS1, chloroplastic from Cannabis sativa (Hemp).